The following is a 152-amino-acid chain: Ribonuclease H (152 aa).

The 142-residue stretch at methionine 1–glutamate 142 folds into the RNase H type-1 domain. Mg(2+)-binding residues include aspartate 10, glutamate 48, aspartate 70, and aspartate 134.

This sequence belongs to the RNase H family. As to quaternary structure, monomer. It depends on Mg(2+) as a cofactor.

Its subcellular location is the cytoplasm. It catalyses the reaction Endonucleolytic cleavage to 5'-phosphomonoester.. In terms of biological role, endonuclease that specifically degrades the RNA of RNA-DNA hybrids. This Rickettsia typhi (strain ATCC VR-144 / Wilmington) protein is Ribonuclease H.